The following is a 61-amino-acid chain: Temporin-MT3 (61 aa).

The N-terminal stretch at 1–22 (MFTLKKPLLLLFFLGTINLSLC) is a signal peptide. Residues 23–44 (EQERNAEEERRDEPDERNAEVE) constitute a propeptide, removed in mature form. L59 carries the post-translational modification Leucine amide.

This sequence belongs to the frog skin active peptide (FSAP) family. Temporin subfamily. As to expression, expressed by the skin glands.

The protein localises to the secreted. In terms of biological role, antimicrobial peptide. The chain is Temporin-MT3 from Amolops mantzorum (Sichuan torrent frog).